Here is a 441-residue protein sequence, read N- to C-terminus: GTPase Der (441 aa).

2 EngA-type G domains span residues 4–168 (PVVA…PEDI) and 177–352 (IRIA…EQNS). GTP contacts are provided by residues 10 to 17 (GRPNVGKS), 57 to 61 (DTGGI), 121 to 124 (NKVE), 183 to 190 (GRPNVGKS), 230 to 234 (DTAGM), and 295 to 298 (NKWD). The region spanning 353 to 437 (TRVATATLNT…PIRMIVRQKD (85 aa)) is the KH-like domain.

This sequence belongs to the TRAFAC class TrmE-Era-EngA-EngB-Septin-like GTPase superfamily. EngA (Der) GTPase family. As to quaternary structure, associates with the 50S ribosomal subunit.

Its function is as follows. GTPase that plays an essential role in the late steps of ribosome biogenesis. This chain is GTPase Der, found in Desulfitobacterium hafniense (strain DSM 10664 / DCB-2).